A 466-amino-acid chain; its full sequence is cAMP-dependent protein kinase regulatory subunit (466 aa).

Residues 25-231 (QFAANYFTKR…RLEKAVGKNF (207 aa)) are dimerization and phosphorylation. The segment covering 71–80 (ASLSHGSSKA) has biased composition (low complexity). Disordered stretches follow at residues 71-90 (ASLSHGSSKANASQSGISSS), 109-139 (STHIVDHLDSTHSNTTASPAKASGGDAPGIF), 154-179 (NSSVDPMAPEPTATTHSFPRRSVVNP), and 193-218 (SVSGETLQPDHLDDWKPENFQEKSPE). A compositionally biased stretch (polar residues) spans 81–90 (NASQSGISSS). Basic and acidic residues predominate over residues 109–118 (STHIVDHLDS). S193 bears the Phosphoserine mark. Residues 200-218 (QPDHLDDWKPENFQEKSPE) are compositionally biased toward basic and acidic residues. 3',5'-cyclic AMP-binding positions include 232–347 (LFNK…LLKN), E297, R306, 350–466 (ILKS…RSKH), E416, and R425.

The protein belongs to the cAMP-dependent kinase regulatory chain family. In terms of assembly, tetramer, composed of 2 regulatory (R) and 2 catalytic (C) subunits. In the presence of cAMP it dissociates into 2 active monomeric C subunits and an R dimer.

The polypeptide is cAMP-dependent protein kinase regulatory subunit (PKAR) (Kluyveromyces lactis (strain ATCC 8585 / CBS 2359 / DSM 70799 / NBRC 1267 / NRRL Y-1140 / WM37) (Yeast)).